The sequence spans 545 residues: CTP synthase (545 aa).

The interval 1–266 (MTTNYIFVTG…DDYICKRFSL (266 aa)) is amidoligase domain. Ser14 contributes to the CTP binding site. Residue Ser14 participates in UTP binding. ATP is bound by residues 15–20 (SLGKGI) and Asp72. Residues Asp72 and Glu140 each contribute to the Mg(2+) site. Residues 147–149 (DIE), 187–192 (KTKPTQ), and Lys223 each bind CTP. Residues 187–192 (KTKPTQ) and Lys223 each bind UTP. Residue 239-241 (KDV) participates in ATP binding. The Glutamine amidotransferase type-1 domain occupies 291–542 (TIGMVGKYIE…VKAASEFQKR (252 aa)). L-glutamine is bound at residue Gly352. The active-site Nucleophile; for glutamine hydrolysis is Cys379. Residues 380-383 (LGMQ), Glu403, and Arg470 contribute to the L-glutamine site. Residues His515 and Glu517 contribute to the active site.

This sequence belongs to the CTP synthase family. Homotetramer.

The catalysed reaction is UTP + L-glutamine + ATP + H2O = CTP + L-glutamate + ADP + phosphate + 2 H(+). The enzyme catalyses L-glutamine + H2O = L-glutamate + NH4(+). It catalyses the reaction UTP + NH4(+) + ATP = CTP + ADP + phosphate + 2 H(+). It functions in the pathway pyrimidine metabolism; CTP biosynthesis via de novo pathway; CTP from UDP: step 2/2. With respect to regulation, allosterically activated by GTP, when glutamine is the substrate; GTP has no effect on the reaction when ammonia is the substrate. The allosteric effector GTP functions by stabilizing the protein conformation that binds the tetrahedral intermediate(s) formed during glutamine hydrolysis. Inhibited by the product CTP, via allosteric rather than competitive inhibition. Catalyzes the ATP-dependent amination of UTP to CTP with either L-glutamine or ammonia as the source of nitrogen. Regulates intracellular CTP levels through interactions with the four ribonucleotide triphosphates. In Shigella boydii serotype 18 (strain CDC 3083-94 / BS512), this protein is CTP synthase.